Consider the following 387-residue polypeptide: MGLHNEPNTILICRYGELVLKGKNRLQFVKQLKKNVKQAFKKLSITNPVDYQFDMLVVGEVISTQRSLLKNLFTRLPGLSVCLFALQIPHDEAQLLALLQQVVQSHPSFKIEVRRRDKLFACNSSAFKKYLALQLWEKYQLKGKLVDPAITVHVEVTKEHFLIISESFNGIGGLPVFTSGTALALLSGGIDSPVAASLVLQRGFNVDFITFINEPGHNAATIGKIQRLANLVSLNQTLCTGRLFVFDFTDLQKELSHISLEGYRIVLMRRCFYKIASLFKYDCLITGEALGQVASQTIDNLKVIQAVVPNTFVIRPLIGLSKDKIIEWAKALGTFETSIEHHMDTCTVFAPKKPTTKAKLAIVEKLESELLFVRELIEAGVKKLQND.

Positions 67–167 (SLLKNLFTRL…KEHFLIISES (101 aa)) constitute a THUMP domain. ATP is bound by residues 185 to 186 (LL), 210 to 211 (TF), Arg-269, Gly-287, and Gln-296.

This sequence belongs to the ThiI family.

The protein resides in the cytoplasm. The catalysed reaction is [ThiI sulfur-carrier protein]-S-sulfanyl-L-cysteine + a uridine in tRNA + 2 reduced [2Fe-2S]-[ferredoxin] + ATP + H(+) = [ThiI sulfur-carrier protein]-L-cysteine + a 4-thiouridine in tRNA + 2 oxidized [2Fe-2S]-[ferredoxin] + AMP + diphosphate. The enzyme catalyses [ThiS sulfur-carrier protein]-C-terminal Gly-Gly-AMP + S-sulfanyl-L-cysteinyl-[cysteine desulfurase] + AH2 = [ThiS sulfur-carrier protein]-C-terminal-Gly-aminoethanethioate + L-cysteinyl-[cysteine desulfurase] + A + AMP + 2 H(+). The protein operates within cofactor biosynthesis; thiamine diphosphate biosynthesis. Functionally, catalyzes the ATP-dependent transfer of a sulfur to tRNA to produce 4-thiouridine in position 8 of tRNAs, which functions as a near-UV photosensor. Also catalyzes the transfer of sulfur to the sulfur carrier protein ThiS, forming ThiS-thiocarboxylate. This is a step in the synthesis of thiazole, in the thiamine biosynthesis pathway. The sulfur is donated as persulfide by IscS. The sequence is that of Probable tRNA sulfurtransferase from Mycoplasma pneumoniae (strain ATCC 29342 / M129 / Subtype 1) (Mycoplasmoides pneumoniae).